The sequence spans 181 residues: GATA zinc finger domain-containing protein 22 (181 aa).

The GATA-type zinc finger occupies 118 to 145 (CQICLTNNTPYWRWSVIENNKIRVCNRC).

This Dictyostelium discoideum (Social amoeba) protein is GATA zinc finger domain-containing protein 22 (gtaV).